Here is a 953-residue protein sequence, read N- to C-terminus: uncharacterized protein (953 aa).

The next 11 helical transmembrane spans lie at 23–43 (VVTS…AFLI), 103–123 (YLFI…PILL), 148–168 (GRYF…LYII), 392–412 (VSAI…VGMI), 435–455 (LLGL…MSFL), 481–501 (AYFA…SAAT), 540–560 (ISSG…LGAF), 575–595 (LSSM…VITF), 599–619 (IISP…YIAY), 642–662 (LFQT…LFAV), and 666–686 (WGPI…HLHL). Residues 910 to 953 (VPPPYNDVKDEANGEANGEFDTASKENNPFADPKYKEEESRSAV) are disordered. Residues 942 to 953 (PKYKEEESRSAV) are compositionally biased toward basic and acidic residues. Serine 949 carries the post-translational modification Phosphoserine.

Belongs to the CSC1 (TC 1.A.17) family.

It localises to the membrane. Functionally, acts as an osmosensitive calcium-permeable cation channel. This is an uncharacterized protein from Saccharomyces cerevisiae (strain ATCC 204508 / S288c) (Baker's yeast).